The following is an 876-amino-acid chain: Alanine--tRNA ligase (876 aa).

K74 carries the post-translational modification N6-acetyllysine. H564, H568, C666, and H670 together coordinate Zn(2+).

It belongs to the class-II aminoacyl-tRNA synthetase family. As to quaternary structure, homotetramer. It depends on Zn(2+) as a cofactor.

The protein localises to the cytoplasm. It catalyses the reaction tRNA(Ala) + L-alanine + ATP = L-alanyl-tRNA(Ala) + AMP + diphosphate. In terms of biological role, catalyzes the attachment of alanine to tRNA(Ala) in a two-step reaction: alanine is first activated by ATP to form Ala-AMP and then transferred to the acceptor end of tRNA(Ala). Also edits incorrectly charged Ser-tRNA(Ala) and Gly-tRNA(Ala) via its editing domain. In Shigella flexneri serotype 5b (strain 8401), this protein is Alanine--tRNA ligase.